Consider the following 171-residue polypeptide: Putative metal-dependent hydrolase BH0277 (171 aa).

Zn(2+) contacts are provided by His-64, His-155, and His-159.

This sequence belongs to the metal hydrolase YfiT family. In terms of assembly, homodimer. Requires Zn(2+) as cofactor.

Its subcellular location is the cytoplasm. In terms of biological role, possible metal-dependent hydrolase. This is Putative metal-dependent hydrolase BH0277 from Halalkalibacterium halodurans (strain ATCC BAA-125 / DSM 18197 / FERM 7344 / JCM 9153 / C-125) (Bacillus halodurans).